The chain runs to 152 residues: SsrA-binding protein (152 aa).

Belongs to the SmpB family.

It is found in the cytoplasm. Its function is as follows. Required for rescue of stalled ribosomes mediated by trans-translation. Binds to transfer-messenger RNA (tmRNA), required for stable association of tmRNA with ribosomes. tmRNA and SmpB together mimic tRNA shape, replacing the anticodon stem-loop with SmpB. tmRNA is encoded by the ssrA gene; the 2 termini fold to resemble tRNA(Ala) and it encodes a 'tag peptide', a short internal open reading frame. During trans-translation Ala-aminoacylated tmRNA acts like a tRNA, entering the A-site of stalled ribosomes, displacing the stalled mRNA. The ribosome then switches to translate the ORF on the tmRNA; the nascent peptide is terminated with the 'tag peptide' encoded by the tmRNA and targeted for degradation. The ribosome is freed to recommence translation, which seems to be the essential function of trans-translation. This Helicobacter acinonychis (strain Sheeba) protein is SsrA-binding protein.